We begin with the raw amino-acid sequence, 360 residues long: uncharacterized protein (360 aa).

7 helical membrane passes run serine 26–threonine 48, leucine 58–leucine 80, valine 89–histidine 111, leucine 126–alanine 148, arginine 169–leucine 191, isoleucine 195–leucine 214, and cysteine 227–valine 249.

The protein resides in the cell membrane. This is an uncharacterized protein from Treponema pallidum (strain Nichols).